The sequence spans 445 residues: Tryptophan 5-hydroxylase 1 (445 aa).

Residues 19–94 (AIIFSLKNEV…SIVSMNPTEH (76 aa)) enclose the ACT domain. Phosphoserine; by PKA is present on S58. 3 residues coordinate L-tryptophan: Y236, R258, and T266. Residues H273, H278, and E318 each contribute to the Fe cation site. L-tryptophan contacts are provided by S337 and I367.

This sequence belongs to the biopterin-dependent aromatic amino acid hydroxylase family. Homotetramer. The cofactor is Fe(2+).

It carries out the reaction (6R)-L-erythro-5,6,7,8-tetrahydrobiopterin + L-tryptophan + O2 = 5-hydroxy-L-tryptophan + (4aS,6R)-4a-hydroxy-L-erythro-5,6,7,8-tetrahydrobiopterin. It functions in the pathway aromatic compound metabolism; serotonin biosynthesis; serotonin from L-tryptophan: step 1/2. Functionally, oxidizes L-tryptophan to 5-hydroxy-l-tryptophan in the rate-determining step of serotonin biosynthesis. The sequence is that of Tryptophan 5-hydroxylase 1 (TPH1) from Gallus gallus (Chicken).